The primary structure comprises 246 residues: MAGHSKWANTRHRKAAQDAKRGKIFTKIIRELVTAAKLGGGDPDANPRLRAAVDKALSNNMTRDTLNRAIARGVGGDDDANMETIIYEGYGPGGTAIMIECLSDNRNRTVAEVRHAFSKCGGNLGTDGSVAYLFSKKGVITFEKGDEDTIMEAALEAGAEDVVTYDDGAIDVYTAWEEMGKVRDALEAAGLKADSAEVSMIPSTKADMDAETAPKLMRLIDMLEDCDDVQEVYHNGEISDEIAATL.

A disordered region spans residues 1 to 20 (MAGHSKWANTRHRKAAQDAK).

This sequence belongs to the TACO1 family.

It is found in the cytoplasm. This is Probable transcriptional regulatory protein YebC from Shigella boydii serotype 4 (strain Sb227).